The following is a 1025-amino-acid chain: Multidrug resistance protein MdtC (1025 aa).

The next 12 helical transmembrane spans lie at 3-23, 333-353, 360-380, 387-407, 431-451, 463-483, 528-548, 853-873, 875-895, 897-917, 953-973, and 984-1004; these read FFAL…AITL, EVEQ…FLFL, IIPA…MYLC, LSLM…IVVL, VGFT…PLLL, FAVT…TLTP, LVGV…ISIP, VILI…LYES, VHPL…LLAL, LFNA…IGIV, PIMM…LSGG, and ITIV…TPVV.

It belongs to the resistance-nodulation-cell division (RND) (TC 2.A.6) family. MdtC subfamily. Part of a tripartite efflux system composed of MdtA, MdtB and MdtC. MdtC forms a heteromultimer with MdtB.

It localises to the cell inner membrane. Functionally, the MdtABC tripartite complex confers resistance against novobiocin and deoxycholate. The protein is Multidrug resistance protein MdtC of Escherichia coli (strain 55989 / EAEC).